Consider the following 388-residue polypeptide: Alanine racemase 1 (388 aa).

The active-site Proton acceptor; specific for D-alanine is K40. An N6-(pyridoxal phosphate)lysine modification is found at K40. R138 serves as a coordination point for substrate. Y268 acts as the Proton acceptor; specific for L-alanine in catalysis. M316 provides a ligand contact to substrate.

This sequence belongs to the alanine racemase family. Pyridoxal 5'-phosphate is required as a cofactor.

The enzyme catalyses L-alanine = D-alanine. Its pathway is amino-acid biosynthesis; D-alanine biosynthesis; D-alanine from L-alanine: step 1/1. Catalyzes the interconversion of L-alanine and D-alanine. May also act on other amino acids. This Caldanaerobacter subterraneus subsp. tengcongensis (strain DSM 15242 / JCM 11007 / NBRC 100824 / MB4) (Thermoanaerobacter tengcongensis) protein is Alanine racemase 1 (alr1).